The chain runs to 152 residues: Aspartate carbamoyltransferase regulatory chain (152 aa).

Residues C108, C113, C136, and C139 each coordinate Zn(2+).

It belongs to the PyrI family. As to quaternary structure, contains catalytic and regulatory chains. The cofactor is Zn(2+).

Functionally, involved in allosteric regulation of aspartate carbamoyltransferase. The polypeptide is Aspartate carbamoyltransferase regulatory chain (Pyrococcus furiosus (strain ATCC 43587 / DSM 3638 / JCM 8422 / Vc1)).